Here is a 271-residue protein sequence, read N- to C-terminus: Dipeptidyl-peptidase 6 (271 aa).

SH3b domains follow at residues 1 to 64 (MNAI…LFDD) and 72 to 140 (QKAQ…HPKI). Positions 148–268 (HAFRENVVQT…DLATTITAIG (121 aa)) constitute a NlpC/P60 domain. Cys-178 acts as the Nucleophile in catalysis. The Proton acceptor role is filled by His-224. His-236 is a catalytic residue.

The protein belongs to the peptidase C40 family.

The protein localises to the cytoplasm. Involved in cell sporulation. Hydrolyzes gamma-D-Glu-L-(meso)A2pm linkages only in those peptide units that have a free N-terminal L-alanine. The sequence is that of Dipeptidyl-peptidase 6 from Lysinibacillus sphaericus (Bacillus sphaericus).